We begin with the raw amino-acid sequence, 473 residues long: UDP-N-acetylmuramate--L-alanine ligase (473 aa).

119–125 (GTHGKTT) contributes to the ATP binding site.

It belongs to the MurCDEF family.

The protein localises to the cytoplasm. It catalyses the reaction UDP-N-acetyl-alpha-D-muramate + L-alanine + ATP = UDP-N-acetyl-alpha-D-muramoyl-L-alanine + ADP + phosphate + H(+). It participates in cell wall biogenesis; peptidoglycan biosynthesis. Its function is as follows. Cell wall formation. The protein is UDP-N-acetylmuramate--L-alanine ligase of Caulobacter vibrioides (strain NA1000 / CB15N) (Caulobacter crescentus).